We begin with the raw amino-acid sequence, 169 residues long: Mediator of RNA polymerase II transcription subunit 28 (169 aa).

The segment at 1 to 35 (MFSAQQPGPPPPNQPGAPAGLMSTPPGAKNPSSTL) is disordered. A coiled-coil region spans residues 99–137 (EQVIKEDVSELRNELQRKEALIQKHLTKLRSWQQVLEEI).

It belongs to the Mediator complex subunit 28 family. As to quaternary structure, component of the Mediator complex.

The protein localises to the nucleus. Functionally, component of the Mediator complex, a coactivator involved in the regulated transcription of nearly all RNA polymerase II-dependent genes. Mediator functions as a bridge to convey information from gene-specific regulatory proteins to the basal RNA polymerase II transcription machinery. Mediator is recruited to promoters by direct interactions with regulatory proteins and serves as a scaffold for the assembly of a functional preinitiation complex with RNA polymerase II and the general transcription factors. This Xenopus tropicalis (Western clawed frog) protein is Mediator of RNA polymerase II transcription subunit 28 (med28).